Consider the following 324-residue polypeptide: Phospho-N-acetylmuramoyl-pentapeptide-transferase (324 aa).

A run of 9 helical transmembrane segments spans residues 13–33 (VLSALLMGFAFSMVLGPIFIP), 59–79 (PTMGGLIFFISVTVTMLIIGY), 85–105 (GMVVLYSLIAFGIIGFLDDIL), 121–141 (MILLLLFSIALAYYGYTNIGT), 143–163 (IIIPFMNSKLNLGIFYIPLVV), 179–199 (IDGLASSVTVIVLTFFAIVGF), 201–221 (TGHYQVGVFSIALAGALLGFL), 243–263 (AIATIALILKMPLFIIIVGGI), and 303–323 (VKLVTVFSIITLILCIIGFIA).

This sequence belongs to the glycosyltransferase 4 family. MraY subfamily. Mg(2+) is required as a cofactor.

It localises to the cell membrane. It carries out the reaction UDP-N-acetyl-alpha-D-muramoyl-L-alanyl-gamma-D-glutamyl-meso-2,6-diaminopimeloyl-D-alanyl-D-alanine + di-trans,octa-cis-undecaprenyl phosphate = di-trans,octa-cis-undecaprenyl diphospho-N-acetyl-alpha-D-muramoyl-L-alanyl-D-glutamyl-meso-2,6-diaminopimeloyl-D-alanyl-D-alanine + UMP. It participates in cell wall biogenesis; peptidoglycan biosynthesis. Catalyzes the initial step of the lipid cycle reactions in the biosynthesis of the cell wall peptidoglycan: transfers peptidoglycan precursor phospho-MurNAc-pentapeptide from UDP-MurNAc-pentapeptide onto the lipid carrier undecaprenyl phosphate, yielding undecaprenyl-pyrophosphoryl-MurNAc-pentapeptide, known as lipid I. This chain is Phospho-N-acetylmuramoyl-pentapeptide-transferase, found in Clostridium botulinum (strain Alaska E43 / Type E3).